The primary structure comprises 371 residues: 3-methyl-D-ornithine--L-lysine ligase (371 aa).

An ATP-binding site is contributed by lysine 18. 19-20 (LQ) provides a ligand contact to L-lysine. Residues aspartate 39, 57 to 58 (NI), and 80 to 81 (EN) each bind ATP. Glutamate 80 lines the L-lysine pocket. An ATP-grasp domain is found at 93 to 277 (EKFSCPVLFD…LIELLFRAFN (185 aa)). ADP-binding positions include lysine 112, lysine 139, serine 146, and 168–171 (EEYV). D-ornithine contacts are provided by residues 177 to 179 (SLE) and aspartate 233. Residues glutamate 235, glutamate 247, and aspartate 249 each coordinate Mg(2+). Glutamate 247 serves as a coordination point for ADP. D-ornithine contacts are provided by residues 251–256 (RFPSQT) and glutamate 310. L-lysine-binding residues include serine 254 and glutamate 310.

This sequence belongs to the PylC family. It depends on Mg(2+) as a cofactor.

The catalysed reaction is (3R)-3-methyl-D-ornithine + L-lysine + ATP = (3R)-3-methyl-D-ornithyl-N(6)-L-lysine + ADP + phosphate + H(+). Its pathway is amino-acid biosynthesis; L-pyrrolysine biosynthesis. Functionally, is required for the biosynthesis of pyrrolysine. Catalyzes the ATP-dependent ligation between (3R)-3-methyl-D-ornithine and L-lysine, leading to (3R)-3-methyl-D-ornithyl-N6-L-lysine. Is also involved in the synthesis of pyrroline-carboxy-lysine (Pcl), a demethylated form of pyrrolysine that is generated by the pyrrolysine biosynthetic enzymes when the growth media is supplemented with D-ornithine. This is 3-methyl-D-ornithine--L-lysine ligase from Methanosarcina mazei (strain ATCC BAA-159 / DSM 3647 / Goe1 / Go1 / JCM 11833 / OCM 88) (Methanosarcina frisia).